We begin with the raw amino-acid sequence, 93 residues long: Small ribosomal subunit protein uS19 (93 aa).

Belongs to the universal ribosomal protein uS19 family.

Its function is as follows. Protein S19 forms a complex with S13 that binds strongly to the 16S ribosomal RNA. This chain is Small ribosomal subunit protein uS19, found in Oleidesulfovibrio alaskensis (strain ATCC BAA-1058 / DSM 17464 / G20) (Desulfovibrio alaskensis).